The sequence spans 345 residues: MPLFGSKKETAKKSSKKDKDEGKMPAVEDKYILKDLLGTGAFSQVRLAEVKEDPSRVVAIKIIDKKALKGKEDSLENEIRVLRRLQHPNIVQLMETYEDREHVYLIIELVTGGELFDRIVEKGSYTEKDASDLIRQVLEAVDYMHDQGVVHRDLKPENLLYYSPDEDSKIMISDFGLSKMEDSGIMATACGTPGYVAPEVLAQKPYGKAVDVWSIGVIAYILLCGYPPFYDENDANLFAQILKGEFEFDSPYWDEISESAKDFIRQLMCVDVEKRYTCKQALGHPWISGNAASTENIHSSVSEQLKKNFAKSRWRQAYHATAVIRQMRLFATKQVIVRRKLSESQ.

The tract at residues 1–23 (MPLFGSKKETAKKSSKKDKDEGK) is disordered. The Protein kinase domain occupies 31–287 (YILKDLLGTG…CKQALGHPWI (257 aa)). ATP contacts are provided by residues 37–45 (LGTGAFSQV) and lysine 61. Catalysis depends on aspartate 153, which acts as the Proton acceptor. Positions 287-327 (ISGNAASTENIHSSVSEQLKKNFAKSRWRQAYHATAVIRQM) are autoinhibitory domain. Residues 307–328 (KNFAKSRWRQAYHATAVIRQMR) are calmodulin-binding.

This sequence belongs to the protein kinase superfamily. CAMK Ser/Thr protein kinase family. CaMK subfamily. Highly expressed in hepatopancreas and to a lesser extent in gills. Low expression in hemocytes, testis, ovary, heart, eyestalk, muscle and epidermis.

The catalysed reaction is L-seryl-[protein] + ATP = O-phospho-L-seryl-[protein] + ADP + H(+). The enzyme catalyses L-threonyl-[protein] + ATP = O-phospho-L-threonyl-[protein] + ADP + H(+). With respect to regulation, activated by Ca(2+)/calmodulin. Binding of calmodulin results in conformational change that relieves intrasteric autoinhibition. In terms of biological role, calcium/calmodulin-dependent protein kinase that operates in the calcium-triggered CaMKK-CaMK1 signaling cascade and, upon calcium influx, regulates transcription activators activity, cell cycle, hormone production, cell differentiation, actin filament organization and neurite outgrowth. Involved in molting. This is Calcium/calmodulin-dependent protein kinase type 1 from Macrobrachium nipponense (Oriental river shrimp).